We begin with the raw amino-acid sequence, 933 residues long: Serine/threonine-protein kinase EDR1 (933 aa).

Residues 1-10 show a composition bias toward basic residues; that stretch reads MKHIFKKLHR. Disordered regions lie at residues 1–74, 342–424, 527–550, and 604–650; these read MKHI…ADYM, CNSN…TAIG, HRDPRYGNTQSSYATSSSNGAISS, and HGQQ…YRND. Positions 37-48 are enriched in polar residues; it reads NPPQATPSSVTE. Residues 53–68 are compositionally biased toward low complexity; that stretch reads AGATSSMASPAPTAAS. The span at 342-356 shows a compositional bias: polar residues; it reads CNSNGNKFPTAQFSN. Over residues 367–378 the composition is skewed to low complexity; that stretch reads SSHSSMANYSSS. The span at 379-389 shows a compositional bias: basic and acidic residues; the sequence is LDRRTEAERTD. A compositionally biased stretch (low complexity) spans 404–413; sequence SSPSSVTSST. Residues 533–550 are compositionally biased toward polar residues; it reads GNTQSSYATSSSNGAISS. Over residues 607–621 the composition is skewed to basic and acidic residues; it reads QNDESHIHDHRKYTS. Positions 669–925 constitute a Protein kinase domain; sequence LVIAERIGLG…QLTEVLKPLN (257 aa). ATP-binding positions include 675 to 683 and K696; that span reads IGLGSYGEV. The active-site Proton acceptor is D792.

The protein belongs to the protein kinase superfamily. TKL Ser/Thr protein kinase family. RAF subfamily. Interacts with KEG. Binds and recruited by EDR4 at the powdery mildew (e.g. G.cichoracearum) penetration site on the plasma membrane. Post-translationally, autophosphorylated.

The protein resides in the cell membrane. The protein localises to the endosome. Its subcellular location is the nucleus. It is found in the endoplasmic reticulum. It localises to the golgi apparatus. The protein resides in the trans-Golgi network. The protein localises to the early endosome. The enzyme catalyses L-seryl-[protein] + ATP = O-phospho-L-seryl-[protein] + ADP + H(+). The catalysed reaction is L-threonyl-[protein] + ATP = O-phospho-L-threonyl-[protein] + ADP + H(+). Its function is as follows. MAPKKK serine/threonine-protein kinase involved in the regulation of a MAP kinase cascade (probably including MPK3 and MPK6) that negatively regulates salicylic acid- (SA-) dependent defense responses, abscisic acid (ABA) signaling, and ethylene-induced senescence. Also modulates stress response (e.g. drought) signaling and cell death, in an ORE9-dependent manner. Functions at a point of cross talk between ethylene, ABA and SA signaling that impinges on senescence and cell death. On the other hand, it confers sensitivity to various pathogens such as the fungus E.cichoracearum, the oomycete H.parasitica and the bacteria P.syringae pv. tomato DC3000. Required for resistance to some hemibiotrophic/necrotrophic fungal pathogens (e.g. C.gloeosporioides, C.higginsianum and A.brassicicola) through the induction of defensin expression, probably by repressing MYC2, an inhibitor of defensin genes (PDFs). Together with KEG, may regulate endocytic trafficking and/or the formation of signaling complexes on trans-Golgi network (TGN)/ early endosome (EE) vesicles during stress responses. The polypeptide is Serine/threonine-protein kinase EDR1 (EDR1) (Arabidopsis thaliana (Mouse-ear cress)).